Reading from the N-terminus, the 133-residue chain is Small ribosomal subunit protein uS8c (133 aa).

The protein belongs to the universal ribosomal protein uS8 family. As to quaternary structure, part of the 30S ribosomal subunit.

The protein localises to the plastid. It localises to the chloroplast. In terms of biological role, one of the primary rRNA binding proteins, it binds directly to 16S rRNA central domain where it helps coordinate assembly of the platform of the 30S subunit. This is Small ribosomal subunit protein uS8c (rps8) from Chlorokybus atmophyticus (Soil alga).